A 132-amino-acid chain; its full sequence is Phosphoribosyl-AMP cyclohydrolase (132 aa).

Residue aspartate 79 coordinates Mg(2+). Cysteine 80 lines the Zn(2+) pocket. 2 residues coordinate Mg(2+): aspartate 81 and aspartate 83. Zn(2+) is bound by residues cysteine 100 and cysteine 107.

It belongs to the PRA-CH family. Homodimer. Mg(2+) is required as a cofactor. The cofactor is Zn(2+).

The protein localises to the cytoplasm. It carries out the reaction 1-(5-phospho-beta-D-ribosyl)-5'-AMP + H2O = 1-(5-phospho-beta-D-ribosyl)-5-[(5-phospho-beta-D-ribosylamino)methylideneamino]imidazole-4-carboxamide. It participates in amino-acid biosynthesis; L-histidine biosynthesis; L-histidine from 5-phospho-alpha-D-ribose 1-diphosphate: step 3/9. In terms of biological role, catalyzes the hydrolysis of the adenine ring of phosphoribosyl-AMP. The polypeptide is Phosphoribosyl-AMP cyclohydrolase (Delftia acidovorans (strain DSM 14801 / SPH-1)).